The chain runs to 280 residues: MLERAQRTLRREVRYSGVGIHFGKSATITLEPAKENTGIVFCRSDLLGEHIPALLPHVCNTGRSTTLSSGDSIIATVEHLMAALRSSNIDNVIVRCDEEEIPIGDGSSHVFMQLIHDAGVCTQNDKVSIARLSQPVYYQAQDTFLAAFPCDELKISYTLHYPQSPTIGTQYRSFVITEESFRKEIAPCRTFALYNELCFLMERGLIGGGCLENAVVFKDDGVISLGQLRFPDEPVRHKILDLIGDLSLVGRPFVAHIVAVGSGHSSNIALGRKILEVLQP.

Positions 79, 237, and 241 each coordinate Zn(2+). Residue H264 is the Proton donor of the active site.

Belongs to the LpxC family. Requires Zn(2+) as cofactor.

It carries out the reaction a UDP-3-O-[(3R)-3-hydroxyacyl]-N-acetyl-alpha-D-glucosamine + H2O = a UDP-3-O-[(3R)-3-hydroxyacyl]-alpha-D-glucosamine + acetate. It participates in glycolipid biosynthesis; lipid IV(A) biosynthesis; lipid IV(A) from (3R)-3-hydroxytetradecanoyl-[acyl-carrier-protein] and UDP-N-acetyl-alpha-D-glucosamine: step 2/6. Its function is as follows. Catalyzes the hydrolysis of UDP-3-O-myristoyl-N-acetylglucosamine to form UDP-3-O-myristoylglucosamine and acetate, the committed step in lipid A biosynthesis. This chain is UDP-3-O-acyl-N-acetylglucosamine deacetylase, found in Chlamydia abortus (strain DSM 27085 / S26/3) (Chlamydophila abortus).